Reading from the N-terminus, the 274-residue chain is NH(3)-dependent NAD(+) synthetase (274 aa).

Gly46–Ser53 lines the ATP pocket. Residue Asp52 participates in Mg(2+) binding. A deamido-NAD(+)-binding site is contributed by Arg140. Thr160 contributes to the ATP binding site. Position 165 (Glu165) interacts with Mg(2+). Deamido-NAD(+)-binding residues include Lys173 and Asp180. ATP is bound by residues Lys189 and Thr211. His260 to Lys261 is a deamido-NAD(+) binding site.

This sequence belongs to the NAD synthetase family. In terms of assembly, homodimer.

The enzyme catalyses deamido-NAD(+) + NH4(+) + ATP = AMP + diphosphate + NAD(+) + H(+). It participates in cofactor biosynthesis; NAD(+) biosynthesis; NAD(+) from deamido-NAD(+) (ammonia route): step 1/1. In terms of biological role, catalyzes the ATP-dependent amidation of deamido-NAD to form NAD. Uses ammonia as a nitrogen source. This chain is NH(3)-dependent NAD(+) synthetase, found in Streptococcus pyogenes serotype M18 (strain MGAS8232).